Reading from the N-terminus, the 144-residue chain is Mannitol-specific phosphotransferase enzyme IIA component (144 aa).

The PTS EIIA type-2 domain occupies 3 to 142 (ELFSNDNIFL…EEIKQVFEEA (140 aa)). H63 acts as the Tele-phosphohistidine intermediate in catalysis. The residue at position 63 (H63) is a Phosphohistidine; by HPr.

Homodimer or homotrimer. Seems to be a monomer when not phosphorylated.

Its subcellular location is the cytoplasm. In terms of biological role, the phosphoenolpyruvate-dependent sugar phosphotransferase system (sugar PTS), a major carbohydrate active transport system, catalyzes the phosphorylation of incoming sugar substrates concomitantly with their translocation across the cell membrane. The enzyme II CmtAB PTS system is involved in D-mannitol transport. This is Mannitol-specific phosphotransferase enzyme IIA component (mtlF) from Staphylococcus aureus (strain COL).